A 138-amino-acid chain; its full sequence is Large ribosomal subunit protein uL16 (138 aa).

The span at Met1–Ser16 shows a compositional bias: basic residues. Residues Met1 to Thr25 form a disordered region.

This sequence belongs to the universal ribosomal protein uL16 family. Part of the 50S ribosomal subunit.

Binds 23S rRNA and is also seen to make contacts with the A and possibly P site tRNAs. The sequence is that of Large ribosomal subunit protein uL16 from Rhodococcus jostii (strain RHA1).